The chain runs to 436 residues: Trigger factor (436 aa).

The PPIase FKBP-type domain maps to 163 to 248; it reads GDRATIDFEG…VKKIEAAHLP (86 aa).

This sequence belongs to the FKBP-type PPIase family. Tig subfamily.

The protein resides in the cytoplasm. It carries out the reaction [protein]-peptidylproline (omega=180) = [protein]-peptidylproline (omega=0). Functionally, involved in protein export. Acts as a chaperone by maintaining the newly synthesized protein in an open conformation. Functions as a peptidyl-prolyl cis-trans isomerase. The sequence is that of Trigger factor from Polaromonas sp. (strain JS666 / ATCC BAA-500).